The chain runs to 320 residues: tRNA U34 carboxymethyltransferase (320 aa).

Residues K89, W103, K108, G127, 177–178 (LE), M193, Y197, and R312 contribute to the carboxy-S-adenosyl-L-methionine site.

It belongs to the class I-like SAM-binding methyltransferase superfamily. CmoB family. Homotetramer.

The catalysed reaction is carboxy-S-adenosyl-L-methionine + 5-hydroxyuridine(34) in tRNA = 5-carboxymethoxyuridine(34) in tRNA + S-adenosyl-L-homocysteine + H(+). Its function is as follows. Catalyzes carboxymethyl transfer from carboxy-S-adenosyl-L-methionine (Cx-SAM) to 5-hydroxyuridine (ho5U) to form 5-carboxymethoxyuridine (cmo5U) at position 34 in tRNAs. The chain is tRNA U34 carboxymethyltransferase from Stutzerimonas stutzeri (strain A1501) (Pseudomonas stutzeri).